We begin with the raw amino-acid sequence, 287 residues long: ATP synthase gamma chain (287 aa).

Belongs to the ATPase gamma chain family. As to quaternary structure, F-type ATPases have 2 components, CF(1) - the catalytic core - and CF(0) - the membrane proton channel. CF(1) has five subunits: alpha(3), beta(3), gamma(1), delta(1), epsilon(1). CF(0) has three main subunits: a, b and c.

The protein localises to the cell inner membrane. In terms of biological role, produces ATP from ADP in the presence of a proton gradient across the membrane. The gamma chain is believed to be important in regulating ATPase activity and the flow of protons through the CF(0) complex. The sequence is that of ATP synthase gamma chain from Geotalea daltonii (strain DSM 22248 / JCM 15807 / FRC-32) (Geobacter daltonii).